We begin with the raw amino-acid sequence, 324 residues long: NADH-ubiquinone oxidoreductase chain 1 (324 aa).

8 consecutive transmembrane segments (helical) span residues 9–29 (LINP…LTLI), 75–95 (FLFL…WAPM), 106–126 (LGIL…LGSG), 146–166 (ISYE…SGGY), 177–197 (SIWL…STLA), 228–248 (LFFL…AVLF), 259–279 (ELTT…FLWV), and 299–319 (FLPL…ALAG).

The protein belongs to the complex I subunit 1 family.

The protein localises to the mitochondrion inner membrane. It catalyses the reaction a ubiquinone + NADH + 5 H(+)(in) = a ubiquinol + NAD(+) + 4 H(+)(out). Core subunit of the mitochondrial membrane respiratory chain NADH dehydrogenase (Complex I) that is believed to belong to the minimal assembly required for catalysis. Complex I functions in the transfer of electrons from NADH to the respiratory chain. The immediate electron acceptor for the enzyme is believed to be ubiquinone. This chain is NADH-ubiquinone oxidoreductase chain 1 (MT-ND1), found in Cyprinus carpio (Common carp).